A 394-amino-acid chain; its full sequence is Acetate kinase (394 aa).

Asn-8 contributes to the Mg(2+) binding site. Lys-15 is a binding site for ATP. Arg-86 lines the substrate pocket. The active-site Proton donor/acceptor is the Asp-143. Residues 201-205, 276-278, and 324-328 contribute to the ATP site; these read HLGNG, DCR, and GIGEN. A Mg(2+)-binding site is contributed by Glu-378.

It belongs to the acetokinase family. In terms of assembly, homodimer. Mg(2+) is required as a cofactor. The cofactor is Mn(2+).

The protein resides in the cytoplasm. It carries out the reaction acetate + ATP = acetyl phosphate + ADP. The protein operates within metabolic intermediate biosynthesis; acetyl-CoA biosynthesis; acetyl-CoA from acetate: step 1/2. In terms of biological role, catalyzes the formation of acetyl phosphate from acetate and ATP. Can also catalyze the reverse reaction. This chain is Acetate kinase, found in Dichelobacter nodosus (strain VCS1703A).